A 208-amino-acid chain; its full sequence is Small ribosomal subunit protein uS4 (208 aa).

The region spanning 98-163 (QRLDNVVYRM…NPQITRAIEL (66 aa)) is the S4 RNA-binding domain.

This sequence belongs to the universal ribosomal protein uS4 family. In terms of assembly, part of the 30S ribosomal subunit. Contacts protein S5. The interaction surface between S4 and S5 is involved in control of translational fidelity.

Functionally, one of the primary rRNA binding proteins, it binds directly to 16S rRNA where it nucleates assembly of the body of the 30S subunit. In terms of biological role, with S5 and S12 plays an important role in translational accuracy. This chain is Small ribosomal subunit protein uS4, found in Campylobacter jejuni (strain RM1221).